Reading from the N-terminus, the 227-residue chain is Lipoprotein-releasing system ATP-binding protein LolD (227 aa).

The 221-residue stretch at 7-227 (LRLERIGRAY…TLKDGRVVDL (221 aa)) folds into the ABC transporter domain. 43-50 (APSGAGKS) is an ATP binding site.

Belongs to the ABC transporter superfamily. Lipoprotein translocase (TC 3.A.1.125) family. The complex is composed of two ATP-binding proteins (LolD) and two transmembrane proteins (LolC and LolE).

Its subcellular location is the cell inner membrane. Functionally, part of the ABC transporter complex LolCDE involved in the translocation of mature outer membrane-directed lipoproteins, from the inner membrane to the periplasmic chaperone, LolA. Responsible for the formation of the LolA-lipoprotein complex in an ATP-dependent manner. The protein is Lipoprotein-releasing system ATP-binding protein LolD of Brucella abortus biovar 1 (strain 9-941).